The primary structure comprises 674 residues: Polyunsaturated fatty acid 5-lipoxygenase (674 aa).

The PLAT domain occupies 2–118 (PSYTVTVATG…EIVLRDGRAK (117 aa)). The Ca(2+) site is built by Gly-17, Thr-18, Asp-19, Asn-44, Asp-45, Glu-47, Asp-79, and Asp-80. In terms of domain architecture, Lipoxygenase spans 119–674 (LARDDQIHIL…PDRIPNSVAI (556 aa)). Ser-272 bears the Phosphoserine mark. Fe cation-binding residues include His-368 and His-373. Residue Ser-524 is modified to Phosphoserine. His-551, Asn-555, and Ile-674 together coordinate Fe cation.

This sequence belongs to the lipoxygenase family. Homodimer. Interacts with ALOX5AP and LTC4S. Interacts with COTL1, the interaction is required for stability and efficient catalytic activity. Interacts with PIK3R1; this interaction bridges ALOX5 with CD40 after CD40 ligation in B cells and leads to the production of reactive oxygen species (ROS). Interacts (via PLAT domain) with DICER1 (via Dicer dsRNA-binding fold domain); this interaction enhances arachidonate 5-lipoxygenase activity and modifies the miRNA precursor processing activity of DICER1. It depends on Fe cation as a cofactor. In terms of processing, serine phosphorylation by MAPKAPK2 is stimulated by arachidonic acid. Phosphorylation on Ser-524 by PKA has an inhibitory effect. Phosphorylation on Ser-272 prevents export from the nucleus. Phosphorylation at Ser-524 is stimulated by 8-bromo-3',5'-cyclic AMP or prostaglandin E2. Expressed in skin Langerhans cells and their emigrated counterparts in draining lymph nodes. Highly expressed in circulating leukocytes.

Its subcellular location is the cytoplasm. The protein resides in the nucleus matrix. It localises to the nucleus membrane. It is found in the perinuclear region. The protein localises to the cytosol. Its subcellular location is the nucleus envelope. The protein resides in the nucleus intermembrane space. The enzyme catalyses (5Z,8Z,11Z,14Z)-eicosatetraenoate + O2 = (5S)-hydroperoxy-(6E,8Z,11Z,14Z)-eicosatetraenoate. The catalysed reaction is (5Z,8Z,11Z,14Z)-eicosatetraenoate + O2 = leukotriene A4 + H2O. It carries out the reaction (5Z,8Z,11Z,14Z)-eicosatetraenoate + O2 = (8S)-hydroperoxy-(5Z,9E,11Z,14Z)-eicosatetraenoate. It catalyses the reaction (5Z,8Z,11Z,14Z)-eicosatetraenoate + O2 = (12S)-hydroperoxy-(5Z,8Z,10E,14Z)-eicosatetraenoate. The enzyme catalyses 18-HEPE + O2 = (5S)-hydroperoxy-18-hydroxy-(7E,9E,11Z,14Z,16E)-eicosapentaenoate. The catalysed reaction is (18R)-hydroxy-(5Z,8Z,11Z,14Z,16E)-eicosapentaenoate + O2 = (5S)-hydroperoxy-(18R)-hydroxy-(6E,8Z,11Z,14Z,16E)-eicosapentaenoate. It carries out the reaction (18S)-hydroxy-(5Z,8Z,11Z,14Z,16E)-eicosapentaenoate + O2 = (5S)-hydroperoxy-(18S)-hydroxy-(6E,8Z,11Z,14Z,16E)-eicosapentaenoate. It catalyses the reaction (5S)-hydroperoxy-(18S)-hydroxy-(6E,8Z,11Z,14Z,16E)-eicosapentaenoate = (5S,6S)-epoxy-(18S)-hydroxy-(7E,9E,11Z,14Z,16E)-eicosapentaenoate + H2O. The enzyme catalyses (5S)-hydroperoxy-(18R)-hydroxy-(6E,8Z,11Z,14Z,16E)-eicosapentaenoate = (5S,6S)-epoxy-(18R)-hydroxy-(7E,9E,11Z,14Z,16E)-eicosapentaenoate + H2O. The catalysed reaction is (5S)-hydroperoxy-18-hydroxy-(7E,9E,11Z,14Z,16E)-eicosapentaenoate = (5S,6S)-epoxy-18-hydroxy-(7E,9E,11Z,14Z,16E)-eicosapentaenoate + H2O. It carries out the reaction (15S)-hydroxy-(5Z,8Z,11Z,13E)-eicosatetraenoate + O2 = (5S)-hydroperoxy-(15S)-hydroxy-(6E,8Z,11Z,13E)-eicosatetraenoate. It catalyses the reaction (5S)-hydroperoxy-(6E,8Z,11Z,14Z)-eicosatetraenoate = leukotriene A4 + H2O. The enzyme catalyses (5Z,8Z)-eicosadienoate + O2 = (5S)-hydroperoxy-(6E,8Z)-eicosadienoate. The catalysed reaction is (12S)-hydroxy-(5Z,8Z,10E,14Z)-eicosatetraenoate + O2 = (5S)-hydroperoxy-(12S)-hydroxy-(6E,8Z,10E,14Z)-eicosatetraenoate. It carries out the reaction (5Z,8Z,11Z,14Z,17Z)-eicosapentaenoate + O2 = 5-hydroperoxy-(6E,8Z,11Z,14Z,17Z)-eicosapentaenoate. It catalyses the reaction (4Z,7Z,10Z,13Z,16Z,19Z)-docosahexaenoate + O2 = (14S)-hydroperoxy-(4Z,7Z,10Z,12E,16Z,19Z)-docosahexaenoate. The enzyme catalyses (4Z,7Z,10Z,13Z,16Z,19Z)-docosahexaenoate + O2 = (7S)-hydroperoxy-(4Z,8E,10Z,13Z,16Z,19Z)-docosahexaenoate. The catalysed reaction is (4Z,7Z,10Z,13Z,16Z,19Z)-docosahexaenoate + O2 = (17S)-hydroperoxy-(4Z,7Z,10Z,13Z,15E,19Z)-docosahexaenoate. The protein operates within lipid metabolism; leukotriene A4 biosynthesis. Its function is as follows. Catalyzes the oxygenation of arachidonate to 5-hydroperoxyeicosatetraenoate (5-HPETE) followed by the dehydration to 5,6- epoxyeicosatetraenoate (Leukotriene A4/LTA4), the first two steps in the biosynthesis of leukotrienes, which are potent mediators of inflammation. Also catalyzes the oxygenation of arachidonic acid into 8-hydroperoxyicosatetraenoic acid (8-HPETE) and 12-hydroperoxyicosatetraenoic acid (12-HPETE). Displays lipoxin synthase activity being able to convert (15S)-HETE into a conjugate tetraene. Although arachidonate is the preferred substrate, this enzyme can also metabolize oxidized fatty acids derived from arachidonate such as (15S)-HETE, eicosapentaenoate (EPA) such as (18R)- and (18S)-HEPE or docosahexaenoate (DHA) which lead to the formation of specialized pro-resolving mediators (SPM) lipoxin and resolvins E and D respectively, therefore it participates in anti-inflammatory responses. Oxidation of DHA directly inhibits endothelial cell proliferation and sprouting angiogenesis via peroxisome proliferator-activated receptor gamma (PPARgamma). It does not catalyze the oxygenation of linoleic acid and does not convert (5S)-HETE to lipoxin isomers. In addition to inflammatory processes, participates in dendritic cell migration, wound healing through an antioxidant mechanism based on heme oxygenase-1 (HO-1) regulation expression, monocyte adhesion to the endothelium via ITGAM expression on monocytes. Moreover, it helps establish an adaptive humoral immunity by regulating primary resting B cells and follicular helper T cells and participates in the CD40-induced production of reactive oxygen species (ROS) after CD40 ligation in B cells through interaction with PIK3R1 that bridges ALOX5 with CD40. May also play a role in glucose homeostasis, regulation of insulin secretion and palmitic acid-induced insulin resistance via AMPK. Can regulate bone mineralization and fat cell differentiation increases in induced pluripotent stem cells. In Mus musculus (Mouse), this protein is Polyunsaturated fatty acid 5-lipoxygenase.